A 362-amino-acid chain; its full sequence is Ribosome-binding ATPase YchF (362 aa).

One can recognise an OBG-type G domain in the interval 3 to 255 (FKCGIIGLPN…MNEDEQKYFM (253 aa)). An ATP-binding site is contributed by 12–17 (NVGKST). Ser16 and Thr36 together coordinate Mg(2+). Residues 277–360 (NLITFFTAGI…QDGDIINFLF (84 aa)) form the TGS domain.

This sequence belongs to the TRAFAC class OBG-HflX-like GTPase superfamily. OBG GTPase family. YchF/OLA1 subfamily. The cofactor is Mg(2+).

In terms of biological role, ATPase that binds to both the 70S ribosome and the 50S ribosomal subunit in a nucleotide-independent manner. This is Ribosome-binding ATPase YchF from Buchnera aphidicola subsp. Schizaphis graminum (strain Sg).